The following is a 170-amino-acid chain: Adenine phosphoribosyltransferase (170 aa).

The protein belongs to the purine/pyrimidine phosphoribosyltransferase family. In terms of assembly, homodimer.

Its subcellular location is the cytoplasm. The catalysed reaction is AMP + diphosphate = 5-phospho-alpha-D-ribose 1-diphosphate + adenine. It participates in purine metabolism; AMP biosynthesis via salvage pathway; AMP from adenine: step 1/1. Catalyzes a salvage reaction resulting in the formation of AMP, that is energically less costly than de novo synthesis. The polypeptide is Adenine phosphoribosyltransferase (Thermosynechococcus vestitus (strain NIES-2133 / IAM M-273 / BP-1)).